A 455-amino-acid chain; its full sequence is Ribulose bisphosphate carboxylase large chain (455 aa).

Lys-5 carries the N6,N6,N6-trimethyllysine modification. Substrate is bound by residues Asn-114 and Thr-164. Lys-166 (proton acceptor) is an active-site residue. Residue Lys-168 participates in substrate binding. Mg(2+)-binding residues include Lys-192, Asp-194, and Glu-195. Lys-192 is subject to N6-carboxylysine. The Proton acceptor role is filled by His-285. 3 residues coordinate substrate: Arg-286, His-318, and Ser-370.

This sequence belongs to the RuBisCO large chain family. Type I subfamily. Heterohexadecamer of 8 large chains and 8 small chains; disulfide-linked. The disulfide link is formed within the large subunit homodimers. The cofactor is Mg(2+). The disulfide bond which can form in the large chain dimeric partners within the hexadecamer appears to be associated with oxidative stress and protein turnover.

It is found in the plastid. It localises to the chloroplast. The catalysed reaction is 2 (2R)-3-phosphoglycerate + 2 H(+) = D-ribulose 1,5-bisphosphate + CO2 + H2O. The enzyme catalyses D-ribulose 1,5-bisphosphate + O2 = 2-phosphoglycolate + (2R)-3-phosphoglycerate + 2 H(+). RuBisCO catalyzes two reactions: the carboxylation of D-ribulose 1,5-bisphosphate, the primary event in carbon dioxide fixation, as well as the oxidative fragmentation of the pentose substrate in the photorespiration process. Both reactions occur simultaneously and in competition at the same active site. This is Ribulose bisphosphate carboxylase large chain from Senna didymobotrya (Popcorn cassia).